Here is a 106-residue protein sequence, read N- to C-terminus: Large ribosomal subunit protein uL24 (106 aa).

The protein belongs to the universal ribosomal protein uL24 family. Part of the 50S ribosomal subunit.

One of two assembly initiator proteins, it binds directly to the 5'-end of the 23S rRNA, where it nucleates assembly of the 50S subunit. Functionally, one of the proteins that surrounds the polypeptide exit tunnel on the outside of the subunit. The protein is Large ribosomal subunit protein uL24 of Laribacter hongkongensis (strain HLHK9).